A 134-amino-acid polypeptide reads, in one-letter code: Small ribosomal subunit protein uS9 (134 aa).

The tract at residues 114–134 is disordered; the sequence is QKEAKNFGGPGARSKYQKSYR.

The protein belongs to the universal ribosomal protein uS9 family.

The polypeptide is Small ribosomal subunit protein uS9 (Methanosarcina mazei (strain ATCC BAA-159 / DSM 3647 / Goe1 / Go1 / JCM 11833 / OCM 88) (Methanosarcina frisia)).